The primary structure comprises 436 residues: 3-ketoacyl-CoA thiolase (436 aa).

Cysteine 99 acts as the Acyl-thioester intermediate in catalysis. Catalysis depends on proton acceptor residues histidine 392 and cysteine 422.

The protein belongs to the thiolase-like superfamily. Thiolase family. As to quaternary structure, heterotetramer of two alpha chains (FadJ) and two beta chains (FadI).

The protein resides in the cytoplasm. It catalyses the reaction an acyl-CoA + acetyl-CoA = a 3-oxoacyl-CoA + CoA. It participates in lipid metabolism; fatty acid beta-oxidation. Its function is as follows. Catalyzes the final step of fatty acid oxidation in which acetyl-CoA is released and the CoA ester of a fatty acid two carbons shorter is formed. The protein is 3-ketoacyl-CoA thiolase of Escherichia coli O6:H1 (strain CFT073 / ATCC 700928 / UPEC).